Reading from the N-terminus, the 551-residue chain is MSEKSREEEKLSFKEQILRDLEKVKGYDEVLKEDEAVVRTPANEPSAEELMADSLSTVEEIMRKAPTVPTHPSQGVPASPADEIQRETPGVPSHPSQDVPSSPAEESGSRPGPGPVRPKKLEREYNETPTRVAVSYTTAEKKAEQAGPETPTPATETVDIIRDTSRRSRREGAKPAKPKKEKKSHVKAFVISFLVFLALLSAGGYFGYQYVLDSLLPIDANSKKYVTVGIPEGSNVQEIGTTLEKAGLVKHGLIFSFYAKYKNYTDLKAGYYNLQKSMSTEDLLKELQKGGTDEPQEPVLATLTIPEGYTLDQIAQTVGQLQGDFKESLTAEAFLAKVQDETFISQAVAKYPTLLESLPVKDSGARYRLEGYLFPATYSIKESTTIESLIDEMLAAMDKNLSLYYSTIKSKNLTVNELLTIASLVEKEGAKTEDRKLIAGVFYNRLNRDMPLQSNIAILYAQGKLGQNISLAEDVAIDTNIDSPYNVYKNVGLMPGPVDSPSLDAIESSINQTKSDNLYFVADVTEGKVYYANNQEDHDRNVAEHVNSKLN.

Residues 1 to 187 (MSEKSREEEK…PKKEKKSHVK (187 aa)) are Cytoplasmic-facing. The interval 38-180 (VRTPANEPSA…EGAKPAKPKK (143 aa)) is disordered. Composition is skewed to low complexity over residues 100–110 (PSSPAEESGSR) and 145–157 (QAGP…ATET). Basic and acidic residues predominate over residues 159-174 (DIIRDTSRRSRREGAK). Residues 188-208 (AFVISFLVFLALLSAGGYFGY) traverse the membrane as a helical segment. The Extracellular segment spans residues 209-551 (QYVLDSLLPI…VAEHVNSKLN (343 aa)).

It belongs to the transglycosylase MltG family. In terms of assembly, interacts with RodZ. Interacts with MreC in the elongasome; interaction is strongly reduced when the 90 C-terminal residues of MreC are missing. Interacts with KhpB (also called EloR/Jag) via MltG's N-terminus, suggesting the N-terminus of MltG is cytoplasmic.

The protein localises to the cell membrane. It carries out the reaction a peptidoglycan chain = a peptidoglycan chain with N-acetyl-1,6-anhydromuramyl-[peptide] at the reducing end + a peptidoglycan chain with N-acetylglucosamine at the non-reducing end.. Its function is as follows. Functions as a peptidoglycan terminase that cleaves nascent peptidoglycan strands endolytically to terminate their elongation. In terms of biological role, mutations in this gene suppress deletion of PBP2b (penA); truncation at residue 168, undefined changes between residue Ile-447 and Ala-505, and mutation of Ala-505 suppress the penA deletion. Probably part of the elongasome which synthesizes peripheral peptidoglycan. The chain is Endolytic murein transglycosylase from Streptococcus pneumoniae (strain ATCC BAA-255 / R6).